The sequence spans 134 residues: Large ribosomal subunit protein eL32 (134 aa).

Belongs to the eukaryotic ribosomal protein eL32 family.

In Tetrahymena thermophila (strain SB210), this protein is Large ribosomal subunit protein eL32 (RPL32).